Consider the following 956-residue polypeptide: Dual specificity protein kinase YAK1 homolog (956 aa).

Positions 122 to 464 constitute a Protein kinase domain; sequence YIVKDLLGHG…PFQAAKHPFI (343 aa). ATP is bound by residues 128 to 136 and Lys151; that span reads LGHGTFGQV. Ser222 is modified (phosphoserine). The Proton acceptor role is filled by Asp249. Disordered regions lie at residues 620-657, 672-781, and 806-956; these read LGTS…HGSP, SAGY…NYSD, and GSTD…GSIA. Residues 622–636 are compositionally biased toward polar residues; sequence TSPSQFTPNTNNQFL. Positions 672-691 are enriched in low complexity; that stretch reads SAGYSGGSQSQDSSLSQAQG. 3 stretches are compositionally biased toward polar residues: residues 697 to 713, 725 to 757, and 806 to 817; these read FYQN…SPSR, QTQG…SSTA, and GSTDASSYSRRF. Residues 818-830 are compositionally biased toward low complexity; that stretch reads NSNASTSSSNPTT. Composition is skewed to polar residues over residues 838–849, 870–884, and 902–912; these read QAFSQVETGSPP, VSQN…QPPQ, and MNAQLPPSNTN. Low complexity predominate over residues 913-924; that stretch reads SGGQQRSPRSSS. The span at 937–947 shows a compositional bias: polar residues; the sequence is NHVPNVPSTSH.

It belongs to the protein kinase superfamily. Ser/Thr protein kinase family. Post-translationally, autophosphorylated at Ser-222.

The catalysed reaction is L-seryl-[protein] + ATP = O-phospho-L-seryl-[protein] + ADP + H(+). It catalyses the reaction L-threonyl-[protein] + ATP = O-phospho-L-threonyl-[protein] + ADP + H(+). It carries out the reaction L-tyrosyl-[protein] + ATP = O-phospho-L-tyrosyl-[protein] + ADP + H(+). Its function is as follows. Dual specificity protein kinase that phosphorylates ANN1, ANN2 and CP29B at serine and threonine residues, and ANN1, ANN2 and ANN4 at tyrosine residues. May regulate the phosphorylation status of annexin proteins. Acts as a positive regulator in abscisic acid (ABA)-mediated regulation of postgermination growth and drought response. May regulate the expression of ABA-responsive genes such as RD22, RD29A, LTI65/RD29B and RAB18. The chain is Dual specificity protein kinase YAK1 homolog from Arabidopsis thaliana (Mouse-ear cress).